Consider the following 115-residue polypeptide: NADH-ubiquinone oxidoreductase chain 3 (115 aa).

3 helical membrane-spanning segments follow: residues 3–23, 55–75, and 84–104; these read FVLA…LTFW, FFLV…LLPL, and LPLM…GLTY.

Belongs to the complex I subunit 3 family. Core subunit of respiratory chain NADH dehydrogenase (Complex I) which is composed of 45 different subunits. Interacts with TMEM186. Interacts with TMEM242.

It is found in the mitochondrion inner membrane. It carries out the reaction a ubiquinone + NADH + 5 H(+)(in) = a ubiquinol + NAD(+) + 4 H(+)(out). Core subunit of the mitochondrial membrane respiratory chain NADH dehydrogenase (Complex I) which catalyzes electron transfer from NADH through the respiratory chain, using ubiquinone as an electron acceptor. Essential for the catalytic activity of complex I. The protein is NADH-ubiquinone oxidoreductase chain 3 of Pongo pygmaeus (Bornean orangutan).